A 267-amino-acid chain; its full sequence is Probable ribose-5-phosphate isomerase 1 (267 aa).

N-acetylglycine is present on Gly-2. Ser-92 is subject to Phosphoserine.

It belongs to the ribose 5-phosphate isomerase family. As to expression, expressed in roots, cotyledons, leaves and flowers.

It is found in the cytoplasm. The catalysed reaction is aldehydo-D-ribose 5-phosphate = D-ribulose 5-phosphate. It functions in the pathway carbohydrate degradation; pentose phosphate pathway; D-ribose 5-phosphate from D-ribulose 5-phosphate (non-oxidative stage): step 1/1. Its function is as follows. Catalyzes the reversible conversion of ribose-5-phosphate to ribulose 5-phosphate. In Arabidopsis thaliana (Mouse-ear cress), this protein is Probable ribose-5-phosphate isomerase 1 (RPI1).